A 305-amino-acid polypeptide reads, in one-letter code: N-acetylglucosamine-1-phosphotransferase subunit gamma (305 aa).

An N-terminal signal peptide occupies residues 1 to 24 (MAAGLARLLLLLGLSAGGPAPAGA). One can recognise an MRH domain in the interval 69–171 (GKCFSLVEST…TFETPLVCHP (103 aa)). Cys-71 and Cys-84 are joined by a disulfide. N-linked (GlcNAc...) asparagine glycans are attached at residues Asn-88 and Asn-115. 2 disulfides stabilise this stretch: Cys-129–Cys-157 and Cys-142–Cys-169. The region spanning 176 to 279 (VYPTLPEALQ…YTRPTETSNL (104 aa)) is the DMAP1-binding domain. Positions 267–305 (GIPYTRPTETSNLEHLGHETPRAKSPEQLRGDPGLRGSL) are disordered. Over residues 281–296 (HLGHETPRAKSPEQLR) the composition is skewed to basic and acidic residues.

In terms of assembly, homodimer; disulfide-linked. Hexamer of two alpha (GNPTAB), two beta (GNPTAB) and two gamma (GNPTG) subunits; disulfide-linked. The alpha and/or the beta subunits of the enzyme constitute the catalytic subunits. Post-translationally, cys-245 mediates the formation of the interchain disulfide bond for formation of the homodimer. Cys-142, Cys-157 and Cys-169 are involved in intramolecular disulfide bonds formation. Widely expressed.

It localises to the secreted. The protein localises to the golgi apparatus. Non-catalytic subunit of the N-acetylglucosamine-1-phosphotransferase complex, an enzyme that catalyzes the formation of mannose 6-phosphate (M6P) markers on high mannose type oligosaccharides in the Golgi apparatus. Binds and presents the high mannose glycans of the acceptor to the catalytic alpha and beta subunits (GNPTAB). Enhances the rate of N-acetylglucosamine-1-phosphate transfer to the oligosaccharides of acid hydrolase acceptors. The chain is N-acetylglucosamine-1-phosphotransferase subunit gamma (GNPTG) from Homo sapiens (Human).